The chain runs to 329 residues: NAD kinase (329 aa).

Positions 1-26 are disordered; that stretch reads MTTPGTDHNADQGADSGDKATKAASG. The active-site Proton acceptor is the Asp-104. NAD(+) contacts are provided by residues 104-105, Arg-109, 179-180, Asp-209, and 220-225; these read DG, NE, and TAYAFS.

Belongs to the NAD kinase family. A divalent metal cation serves as cofactor.

The protein localises to the cytoplasm. The catalysed reaction is NAD(+) + ATP = ADP + NADP(+) + H(+). Involved in the regulation of the intracellular balance of NAD and NADP, and is a key enzyme in the biosynthesis of NADP. Catalyzes specifically the phosphorylation on 2'-hydroxyl of the adenosine moiety of NAD to yield NADP. This chain is NAD kinase, found in Corynebacterium jeikeium (strain K411).